A 486-amino-acid polypeptide reads, in one-letter code: Uridine/cytidine kinase UKL1, chloroplastic (486 aa).

Residues 1–47 (MPEDSSSLDYAMEKASGPHFSGLRFDGLLSSSPPNSSVVSSLRSAVS) constitute a chloroplast transit peptide. The span at 31–54 (SSPPNSSVVSSLRSAVSSSSPSSS) shows a compositional bias: low complexity. The tract at residues 31–67 (SSPPNSSVVSSLRSAVSSSSPSSSDPEAPKQPFIIGV) is disordered. The uridine kinase stretch occupies residues 59-264 (PKQPFIIGVS…ITQHIHTKLG (206 aa)). The uracil phosphoribosyltransferase stretch occupies residues 274 to 486 (NVYVIQSTFQ…RYFGTDEEDQ (213 aa)). GTP contacts are provided by residues K298, R307, and 341–344 (CKKL). Residues R351 and R376 each coordinate 5-phospho-alpha-D-ribose 1-diphosphate. R396 contributes to the GTP binding site. 5-phospho-alpha-D-ribose 1-diphosphate is bound by residues D402, 407-410 (TGNS), and E473. 472–474 (GEF) is a uracil binding site.

This sequence in the N-terminal section; belongs to the uridine kinase family. In the C-terminal section; belongs to the UPRTase family. In terms of tissue distribution, expressed in roots, leaves and stems.

It localises to the plastid. The protein localises to the chloroplast. It is found in the cytoplasm. The enzyme catalyses cytidine + ATP = CMP + ADP + H(+). It carries out the reaction uridine + ATP = UMP + ADP + H(+). The protein operates within pyrimidine metabolism; CTP biosynthesis via salvage pathway; CTP from cytidine: step 1/3. It participates in pyrimidine metabolism; UMP biosynthesis via salvage pathway; UMP from uridine: step 1/1. Functionally, involved in the pyrimidine salvage pathway. Phosphorylates uridine to uridine monophosphate (UMP). Phosphorylates cytidine to cytidine monophosphate (CMP). Does not possess uracil phosphoribosyltransferase (UPRTase) activity that catalyzes the conversion of uracil and 5-phospho-alpha-D-ribose 1-diphosphate (PRPP) to UMP and diphosphate. This chain is Uridine/cytidine kinase UKL1, chloroplastic, found in Arabidopsis thaliana (Mouse-ear cress).